The sequence spans 306 residues: tRNA dimethylallyltransferase (306 aa).

11–18 (GPTAVGKS) is an ATP binding site. Position 13 to 18 (13 to 18 (TAVGKS)) interacts with substrate. Residues 35 to 38 (DSIQ) form an interaction with substrate tRNA region.

This sequence belongs to the IPP transferase family. As to quaternary structure, monomer. Mg(2+) serves as cofactor.

It carries out the reaction adenosine(37) in tRNA + dimethylallyl diphosphate = N(6)-dimethylallyladenosine(37) in tRNA + diphosphate. In terms of biological role, catalyzes the transfer of a dimethylallyl group onto the adenine at position 37 in tRNAs that read codons beginning with uridine, leading to the formation of N6-(dimethylallyl)adenosine (i(6)A). The chain is tRNA dimethylallyltransferase from Borreliella burgdorferi (strain ATCC 35210 / DSM 4680 / CIP 102532 / B31) (Borrelia burgdorferi).